Reading from the N-terminus, the 1170-residue chain is NPC intracellular sterol transporter 1-related protein 1 (1170 aa).

The first 19 residues, 1 to 19, serve as a signal peptide directing secretion; sequence MNVLWIIALVGQLMRLVQG. Intrachain disulfides connect cysteine 23–cysteine 75, cysteine 29–cysteine 41, cysteine 64–cysteine 110, cysteine 76–cysteine 114, cysteine 98–cysteine 230, cysteine 101–cysteine 156, cysteine 223–cysteine 235, and cysteine 232–cysteine 239. Asparagine 123, asparagine 145, and asparagine 178 each carry an N-linked (GlcNAc...) asparagine glycan. The helical transmembrane segment at 260 to 280 threads the bilayer; it reads LSVLIFYTICALFAFMWYYLC. Residue asparagine 314 is glycosylated (N-linked (GlcNAc...) asparagine). Residues 341–361 form a helical membrane-spanning segment; sequence ILITTVFSIFVFSFIIFQYAT. The N-linked (GlcNAc...) asparagine glycan is linked to asparagine 401. Intrachain disulfides connect cysteine 438–cysteine 447 and cysteine 473–cysteine 480. The N-linked (GlcNAc...) asparagine glycan is linked to asparagine 513. 6 consecutive transmembrane segments (helical) span residues 556 to 576, 585 to 605, 616 to 636, 667 to 687, 698 to 718, and 752 to 772; these read NDISTVAISYLMMFLYATWAL, LLLGISGLLIVLASIVCAAGF, IIAEVIPFLILAIGIDNIFLI, ILMSLLCQTGCFLIAAFVTMP, VSVIFNGVLQLTAYVSILSLY, and IIIIFSAWFFTSLVFLPEIQF. The region spanning 557–717 is the SSD domain; it reads DISTVAISYL…LTAYVSILSL (161 aa). Disulfide bonds link cysteine 822–cysteine 828, cysteine 868–cysteine 925, cysteine 869–cysteine 891, and cysteine 879–cysteine 888. Residues asparagine 900 and asparagine 940 are each glycosylated (N-linked (GlcNAc...) asparagine). 5 helical membrane passes run 1000–1020, 1027–1047, 1054–1074, 1099–1119, and 1133–1153; these read LTLKLIGSAIILIFFISSVFL, FLLALVVTMIIVDIGALMALL, VSLVNLIICVGLGVEFCVHIV, IGESVIKGITLTKFIGVCVLA, and MWFTLIIVAALHALLFLPALL.

This sequence belongs to the patched family.

The protein localises to the vacuole membrane. Involved in sphingolipid trafficking. May recycle sphingolipids between cellular membranous compartments. This chain is NPC intracellular sterol transporter 1-related protein 1, found in Saccharomyces cerevisiae (strain ATCC 204508 / S288c) (Baker's yeast).